A 326-amino-acid polypeptide reads, in one-letter code: Serpentine receptor class gamma-14 (326 aa).

The next 7 membrane-spanning stretches (helical) occupy residues 36-56, 67-83, 115-135, 156-176, 204-224, 243-263, and 274-294; these read QIIYIITGIFLNSAVLGTILW, FFTLFSVDCIANISILI, IIMLLTHHVSICKSLLQVLLV, LKYVISAVFLIPFCADWNIAI, FQLVFIIIALSFTFICTAITL, VIISIGFTFKVLFQIYYSFFF, and GFSFLALDFLTVGSPIVMICV.

It belongs to the nematode receptor-like protein srg family.

The protein resides in the membrane. The chain is Serpentine receptor class gamma-14 (srg-14) from Caenorhabditis elegans.